Consider the following 238-residue polypeptide: MALPEMKRVLLKLSGEVLMGEQDYGIDPAFVMELAKEVKAAREQGLQICLVIGGGNIFRGMAGAAQGMERAQADYMGMLATVMNALAMQSALEQLGVHTRVQSAIQMDQVCEPVIRRRAERHLEKDRVVIFAAGVGAPYFTTDSGAALRAAEMNCDALLKGTSVDGVYDSDPKTNPDAKRYDTVGYGKVLADNLKVMDASAVALCRDNDIPIIVFSIREKGNLARVLAGEGVQTVVQN.

12–15 (KLSG) is an ATP binding site. UMP is bound at residue Gly-54. Residues Gly-55 and Arg-59 each contribute to the ATP site. Residues Asp-74 and 135-142 (VGAPYFTT) contribute to the UMP site. ATP is bound by residues Thr-162, Tyr-168, and Asp-171.

It belongs to the UMP kinase family. Homohexamer.

The protein localises to the cytoplasm. It catalyses the reaction UMP + ATP = UDP + ADP. Its pathway is pyrimidine metabolism; CTP biosynthesis via de novo pathway; UDP from UMP (UMPK route): step 1/1. Its activity is regulated as follows. Inhibited by UTP. Its function is as follows. Catalyzes the reversible phosphorylation of UMP to UDP. This is Uridylate kinase from Erythrobacter litoralis (strain HTCC2594).